A 436-amino-acid chain; its full sequence is GTPase Obg (436 aa).

One can recognise an Obg domain in the interval 2-160; the sequence is SMFLDTAKIQ…RELLLELKVL (159 aa). The region spanning 161–338 is the OBG-type G domain; the sequence is ADVGLVGFPS…LLDATAELLD (178 aa). GTP contacts are provided by residues 167–174, 192–196, 214–217, 284–287, and 319–321; these read GFPSVGKS, FTTIV, DLPG, NKMD, and SSL. 2 residues coordinate Mg(2+): S174 and T194. The region spanning 358–436 is the OCT domain; the sequence is GFDEEAPAFE…IGKFEFEFVD (79 aa).

This sequence belongs to the TRAFAC class OBG-HflX-like GTPase superfamily. OBG GTPase family. In terms of assembly, monomer. The cofactor is Mg(2+).

The protein resides in the cytoplasm. Its function is as follows. An essential GTPase which binds GTP, GDP and possibly (p)ppGpp with moderate affinity, with high nucleotide exchange rates and a fairly low GTP hydrolysis rate. Plays a role in control of the cell cycle, stress response, ribosome biogenesis and in those bacteria that undergo differentiation, in morphogenesis control. This chain is GTPase Obg, found in Streptococcus gordonii (strain Challis / ATCC 35105 / BCRC 15272 / CH1 / DL1 / V288).